A 359-amino-acid polypeptide reads, in one-letter code: Alanine racemase (359 aa).

Lys35 (proton acceptor; specific for D-alanine) is an active-site residue. Lys35 carries the N6-(pyridoxal phosphate)lysine modification. Arg131 is a binding site for substrate. Tyr253 serves as the catalytic Proton acceptor; specific for L-alanine. Residue Met301 participates in substrate binding.

This sequence belongs to the alanine racemase family. Pyridoxal 5'-phosphate is required as a cofactor.

It carries out the reaction L-alanine = D-alanine. The protein operates within amino-acid biosynthesis; D-alanine biosynthesis; D-alanine from L-alanine: step 1/1. Functionally, catalyzes the interconversion of L-alanine and D-alanine. May also act on other amino acids. The protein is Alanine racemase (alr) of Laribacter hongkongensis (strain HLHK9).